A 3032-amino-acid polypeptide reads, in one-letter code: Biorientation of chromosomes in cell division protein 1-like 1 (3032 aa).

The segment covering methionine 1–glycine 31 has biased composition (pro residues). Disordered stretches follow at residues methionine 1–aspartate 48, glutamate 164–valine 195, asparagine 214–aspartate 397, and valine 409–arginine 465. Positions alanine 32 to alanine 46 are enriched in gly residues. A compositionally biased stretch (polar residues) spans lysine 234 to valine 243. Residues serine 244 to threonine 261 are compositionally biased toward basic and acidic residues. Serine 264 bears the Phosphoserine mark. Residues threonine 310–cysteine 391 show a composition bias toward basic and acidic residues. A compositionally biased stretch (acidic residues) spans serine 416–glutamate 441. At lysine 471 the chain carries N6-acetyllysine. Serine 480 and serine 482 each carry phosphoserine. Disordered regions lie at residues serine 480 to threonine 1153, methionine 1165 to asparagine 1296, glycine 1309 to aspartate 1366, alanine 1424 to arginine 1491, glycine 1675 to threonine 1701, alanine 1740 to serine 1858, and alanine 1934 to glycine 1978. Basic and acidic residues-rich tracts occupy residues valine 488–leucine 503 and arginine 510–lysine 525. The residue at position 534 (lysine 534) is an N6-acetyllysine. Composition is skewed to basic and acidic residues over residues leucine 547 to valine 568 and serine 578 to arginine 653. Phosphoserine occurs at positions 632 and 656. Residue threonine 657 is modified to Phosphothreonine. 3 stretches are compositionally biased toward basic and acidic residues: residues threonine 668 to serine 736, glycine 743 to arginine 768, and arginine 799 to lysine 846. A compositionally biased stretch (polar residues) spans alanine 848–glutamine 859. Basic and acidic residues-rich tracts occupy residues lysine 860–threonine 872, lysine 934–glutamate 960, alanine 978–arginine 1015, and serine 1022–arginine 1069. At serine 1071 the chain carries Phosphoserine. The segment covering methionine 1086–glutamine 1096 has biased composition (polar residues). A Phosphoserine modification is found at serine 1138. The segment covering serine 1272–valine 1286 has biased composition (low complexity). Polar residues predominate over residues alanine 1312–valine 1329. Residues serine 1315 and serine 1364 each carry the phosphoserine modification. Basic and acidic residues-rich tracts occupy residues histidine 1428–serine 1470 and glycine 1479–arginine 1491. Residues serine 1676 and serine 1685 each carry the phosphoserine modification. Residues histidine 1958–valine 1970 show a composition bias toward basic and acidic residues. Phosphoserine occurs at positions 1989, 2001, 2092, and 2166. The tract at residues proline 2082–glutamate 2101 is disordered. Residues serine 2088–serine 2097 are compositionally biased toward polar residues. 4 disordered regions span residues glutamate 2303–lysine 2322, glutamate 2370–threonine 2469, glutamate 2536–glycine 2559, and aspartate 2575–glycine 2596. A phosphoserine mark is found at serine 2417 and serine 2443. Over residues cysteine 2449 to glutamate 2459 the composition is skewed to basic and acidic residues. Serine 2554 is subject to Phosphoserine. A Phosphoserine modification is found at serine 2681. The tract at residues threonine 2682–arginine 3032 is disordered. Acidic residues-rich tracts occupy residues alanine 2692–glutamate 2701 and serine 2715–aspartate 2725. Over residues leucine 2727–asparagine 2750 the composition is skewed to basic and acidic residues. Over residues serine 2758–glycine 2769 the composition is skewed to polar residues. Residues threonine 2782–isoleucine 2804 are compositionally biased toward basic and acidic residues. Positions isoleucine 2805–lysine 2815 are enriched in basic residues. The segment at residues lysine 2807 to glutamate 2819 is a DNA-binding region (a.T hook). Residues phenylalanine 2822–threonine 2832 show a composition bias toward basic and acidic residues. A compositionally biased stretch (polar residues) spans aspartate 2833–serine 2843. Serine 2840 and serine 2841 each carry phosphoserine. Residues glutamate 2853–serine 2867 are compositionally biased toward basic and acidic residues. Phosphoserine is present on serine 2888. A Phosphothreonine modification is found at threonine 2890. Residues serine 2892, serine 2898, and serine 2907 each carry the phosphoserine modification. Residues lysine 2915 and lysine 2916 each participate in a glycyl lysine isopeptide (Lys-Gly) (interchain with G-Cter in ubiquitin) cross-link. The span at glutamate 2919–proline 2932 shows a compositional bias: acidic residues. Serine 2920 carries the post-translational modification Phosphoserine. A compositionally biased stretch (basic and acidic residues) spans leucine 2975–serine 2987. Serine 3000 carries the phosphoserine modification. A compositionally biased stretch (basic and acidic residues) spans glutamine 3020–arginine 3032.

The protein belongs to the BOD1 family. As to quaternary structure, interacts (via COMPASS-Shg1 domain) with SETD1A at stalled replication forks; this interaction mediates FANCD2-dependent nucleosome remodeling at reversed forks protecting them from nucleolytic degradation.

The protein localises to the chromosome. Its function is as follows. Component of the fork protection machinery required to protect stalled/damaged replication forks from uncontrolled DNA2-dependent resection. Acts by stabilizing RAD51 at stalled replication forks and protecting RAD51 nucleofilaments from the antirecombinogenic activities of FBH1 and BLM. Does not regulate spindle orientation. The protein is Biorientation of chromosomes in cell division protein 1-like 1 of Mus musculus (Mouse).